Reading from the N-terminus, the 205-residue chain is Proteasome subunit beta type-3 (205 aa).

The residue at position 2 (Ser2) is an N-acetylserine. Residue Lys77 is modified to N6-acetyllysine.

It belongs to the peptidase T1B family. As to quaternary structure, the 26S proteasome consists of a 20S proteasome core and two 19S regulatory subunits. The 20S proteasome core is a barrel-shaped complex made of 28 subunits that are arranged in four stacked rings. The two outer rings are each formed by seven alpha subunits, and the two inner rings are formed by seven beta subunits. The proteolytic activity is exerted by three beta-subunits PSMB5, PSMB6 and PSMB7.

The protein localises to the cytoplasm. It localises to the nucleus. Non-catalytic component of the 20S core proteasome complex involved in the proteolytic degradation of most intracellular proteins. This complex plays numerous essential roles within the cell by associating with different regulatory particles. Associated with two 19S regulatory particles, forms the 26S proteasome and thus participates in the ATP-dependent degradation of ubiquitinated proteins. The 26S proteasome plays a key role in the maintenance of protein homeostasis by removing misfolded or damaged proteins that could impair cellular functions, and by removing proteins whose functions are no longer required. Associated with the PA200 or PA28, the 20S proteasome mediates ubiquitin-independent protein degradation. This type of proteolysis is required in several pathways including spermatogenesis (20S-PA200 complex) or generation of a subset of MHC class I-presented antigenic peptides (20S-PA28 complex). This Bos taurus (Bovine) protein is Proteasome subunit beta type-3 (PSMB3).